We begin with the raw amino-acid sequence, 193 residues long: GTP cyclohydrolase 1 (193 aa).

3 residues coordinate Zn(2+): Cys-83, His-86, and Cys-154.

This sequence belongs to the GTP cyclohydrolase I family. Homomer.

It carries out the reaction GTP + H2O = 7,8-dihydroneopterin 3'-triphosphate + formate + H(+). Its pathway is cofactor biosynthesis; 7,8-dihydroneopterin triphosphate biosynthesis; 7,8-dihydroneopterin triphosphate from GTP: step 1/1. The polypeptide is GTP cyclohydrolase 1 (Porphyromonas gingivalis (strain ATCC 33277 / DSM 20709 / CIP 103683 / JCM 12257 / NCTC 11834 / 2561)).